The primary structure comprises 180 residues: Photosystem II extrinsic protein V (180 aa).

The first 40 residues, 1–40, serve as a signal peptide directing secretion; sequence MFSKAFSFQKVFAPARRRLLVLLLAALMAGFGWGLAPVFA. The heme c site is built by cysteine 73, cysteine 76, histidine 77, and histidine 128.

Belongs to the cytochrome c family. PsbV subfamily. As to quaternary structure, PSII is composed of 1 copy each of membrane proteins PsbA, PsbB, PsbC, PsbD, PsbE, PsbF, PsbH, PsbI, PsbJ, PsbK, PsbL, PsbM, PsbT, PsbX, PsbY, PsbZ, Psb30/Ycf12, peripheral proteins PsbO, CyanoQ (PsbQ), PsbU, PsbV and a large number of cofactors. It forms dimeric complexes. Heme c is required as a cofactor.

The protein resides in the cellular thylakoid membrane. Its function is as follows. One of the extrinsic, lumenal subunits of photosystem II (PSII). PSII is a light-driven water plastoquinone oxidoreductase, using light energy to abstract electrons from H(2)O, generating a proton gradient subsequently used for ATP formation. The extrinsic proteins stabilize the structure of photosystem II oxygen-evolving complex (OEC), the ion environment of oxygen evolution and protect the OEC against heat-induced inactivation. Low-potential cytochrome c that plays a role in the OEC of PSII. The protein is Photosystem II extrinsic protein V of Synechococcus sp. (strain JA-2-3B'a(2-13)) (Cyanobacteria bacterium Yellowstone B-Prime).